The primary structure comprises 103 residues: Large ribosomal subunit protein bL21 (103 aa).

Belongs to the bacterial ribosomal protein bL21 family. Part of the 50S ribosomal subunit. Contacts protein L20.

Functionally, this protein binds to 23S rRNA in the presence of protein L20. The chain is Large ribosomal subunit protein bL21 from Aeromonas hydrophila subsp. hydrophila (strain ATCC 7966 / DSM 30187 / BCRC 13018 / CCUG 14551 / JCM 1027 / KCTC 2358 / NCIMB 9240 / NCTC 8049).